The primary structure comprises 419 residues: MKTSLRTLSVALAAALVSPSVLAIEKIDFHGYMRAGVGVSSDGGLAEWQKTMVGRLGNESDTYGEIGLGAEVYKKEDVSFYLESMVSMLSDGSNDSETTIGDDAQFGLRQLNLQIKGLIPGDKEAVIWGGKRYYQRHDLHIIDTKYWNISGSGAGIENYTVGPGAVSVAWVRGDANDVDTRITGDSDVNINYIDVRYAGFKPWAGSWTEVGIDYAMPNPTKQQKEYGGLYDADNAVMLTGEISQDMFGGYNKLVLQYANKGLAQNMISQGGGWYDMWHKTDEAKGYRVINTGLIPITDKFSFNHVLTWGSANDITEYTDKTNLISLVGRAQYQFTQYVRAIGEVGGFYQKDTYHNGSNYKQGGEKYTIALGLAEGPDFLSRPELRVFASYLNDSENGKPFEDGTSNDTWNFGVQVEAWW.

A signal peptide spans 1-23 (MKTSLRTLSVALAAALVSPSVLA).

It belongs to the porin LamB (TC 1.B.3) family. Homotrimer formed of three 18-stranded antiparallel beta-barrels, containing three independent channels.

It is found in the cell outer membrane. It carries out the reaction beta-maltose(in) = beta-maltose(out). Its function is as follows. Involved in the transport of maltose and maltodextrins. This chain is Maltoporin 2, found in Yersinia pseudotuberculosis serotype O:1b (strain IP 31758).